The sequence spans 272 residues: Tryptophan synthase alpha chain (272 aa).

Active-site proton acceptor residues include Glu49 and Asp60.

The protein belongs to the TrpA family. As to quaternary structure, tetramer of two alpha and two beta chains.

The enzyme catalyses (1S,2R)-1-C-(indol-3-yl)glycerol 3-phosphate + L-serine = D-glyceraldehyde 3-phosphate + L-tryptophan + H2O. The protein operates within amino-acid biosynthesis; L-tryptophan biosynthesis; L-tryptophan from chorismate: step 5/5. The alpha subunit is responsible for the aldol cleavage of indoleglycerol phosphate to indole and glyceraldehyde 3-phosphate. The polypeptide is Tryptophan synthase alpha chain (Polaromonas sp. (strain JS666 / ATCC BAA-500)).